The sequence spans 634 residues: Sodium-dependent neutral amino acid transporter B(0)AT1 (634 aa).

Residues 1–41 (MVRLVLPNPGLEERIPSLDELEVIEKEEAGSRPKWDNKAQY) are Cytoplasmic-facing. S17 bears the Phosphoserine mark. A helical transmembrane segment spans residues 42–62 (MLTCVGFCVGLGNVWRFPYLC). Over 63–67 (QSHGG) the chain is Extracellular. A helical membrane pass occupies residues 68–88 (GAFMIPFLILLVFEGIPLLYL). Residues 89–119 (EFAIGQRLRKGSMGVWSSIHPALKGIGIASM) are Cytoplasmic-facing. The chain crosses the membrane as a helical span at residues 120-140 (FVSFMVGLYYNTIIAWVMWYF). Residues 141-192 (FNSFQEPLPWSECPLNQNQTGYVEECAKSSSVDYFWYRETLNISTSISDSGS) lie on the Extracellular side of the membrane. N-linked (GlcNAc...) asparagine glycosylation is found at N158 and N182. The chain crosses the membrane as a helical span at residues 193–213 (IQWWILLCLTCAWSVLYVCII). Over 214–221 (RGIETTGK) the chain is Cytoplasmic. A helical transmembrane segment spans residues 222–242 (AVYITSTLPYVVLTIFLIRGL). Residues 243-268 (TLKGATNGIVFLFTPNITELSNPNTW) lie on the Extracellular side of the membrane. Residue N258 is glycosylated (N-linked (GlcNAc...) asparagine). Residues 269 to 289 (LDAGAQVFYSFSLAFGGLISF) traverse the membrane as a helical segment. The Cytoplasmic portion of the chain corresponds to 290-304 (SSYNSVHNNCEMDSV). The helical transmembrane segment at 305–325 (IVSVINGFTSVYAATVVYSII) threads the bilayer. Residues 326 to 413 (GFRATERFDD…TEAITKMPVS (88 aa)) are Extracellular-facing. N-linked (GlcNAc...) asparagine glycosylation is found at N354 and N368. Residues 414-434 (PLWSVLFFIMLFCLGLSSMFG) traverse the membrane as a helical segment. Residues 435–456 (NMEGVVVPLQDLNITPKKWPKE) are Cytoplasmic-facing. Residues 457-477 (LLTGLICLGTYLIAFIFTLNS) traverse the membrane as a helical segment. Residues 478–487 (GQYWLSLLDS) lie on the Extracellular side of the membrane. The helical transmembrane segment at 488-508 (FAGSIPLLIIAFCEMFAVVYV) threads the bilayer. Residues 509–531 (YGVDRFNKDIEFMIGHKPNIFWQ) are Cytoplasmic-facing. Residues 532-552 (VTWRVVSPLIMLVIFLFFFVI) form a helical membrane-spanning segment. At 553-581 (EVNKTLMYSIWDPNYEEFPKSQKIPYPNW) the chain is on the extracellular side. A glycan (N-linked (GlcNAc...) asparagine) is linked at N555. A helical membrane pass occupies residues 582 to 602 (VYAVVVTVAGVPCLSIPCFAI). Over 603 to 634 (YKFIRNCCQKSDDHHGLVNTLSTASVNGDLKN) the chain is Cytoplasmic. S627 is subject to Phosphoserine.

Belongs to the sodium:neurotransmitter symporter (SNF) (TC 2.A.22) family. SLC6A19 subfamily. In terms of assembly, interacts in a tissue-specific manner with ACE2 in small intestine and with CLTRN in the kidney. Interacts with CLTRN; this interaction is required for trafficking of SLC6A19 to the plasma membrane and for its catalytic activation in kidneys. Interacts with ACE2; this interaction is required for trafficking of SLC6A19 to the plasma membrane and for its catalytic activation in intestine. Interacts with ANPEP; the interaction positively regulates its amino acid transporter activity. In terms of tissue distribution, predominantly expressed in kidney and small intestine (at protein level). Expressed in the intestinal brush border (at protein level). Expression not observed in other organs, such as lung, skeletal muscle, brain, liver and pancreas. In kidney, expression is localized in the renal cortex but not in the medulla. Substantial amounts of expression in the proximal tubules. The distal nephron segments and the glomeruli are consistently negative. In the small intestine, expression is exclusively localized in villus enterocytes. High resolution of the hybridization-positive villi reveals a gradient of expression with the highest levels in apical cells. Not detected in crypt cells or in any other cell types of the small intestine.

The protein resides in the cell membrane. It carries out the reaction L-alanine(in) + Na(+)(in) = L-alanine(out) + Na(+)(out). It catalyses the reaction L-cysteine(in) + Na(+)(in) = L-cysteine(out) + Na(+)(out). The enzyme catalyses L-glutamine(in) + Na(+)(in) = L-glutamine(out) + Na(+)(out). The catalysed reaction is glycine(in) + Na(+)(in) = glycine(out) + Na(+)(out). It carries out the reaction L-isoleucine(in) + Na(+)(in) = L-isoleucine(out) + Na(+)(out). It catalyses the reaction L-leucine(in) + Na(+)(in) = L-leucine(out) + Na(+)(out). The enzyme catalyses L-methionine(in) + Na(+)(in) = L-methionine(out) + Na(+)(out). The catalysed reaction is L-phenylalanine(in) + Na(+)(in) = L-phenylalanine(out) + Na(+)(out). It carries out the reaction L-serine(in) + Na(+)(in) = L-serine(out) + Na(+)(out). It catalyses the reaction L-tryptophan(in) + Na(+)(in) = L-tryptophan(out) + Na(+)(out). The enzyme catalyses L-tyrosine(in) + Na(+)(in) = L-tyrosine(out) + Na(+)(out). The catalysed reaction is L-valine(in) + Na(+)(in) = L-valine(out) + Na(+)(out). Transporter that mediates resorption of neutral amino acids across the apical membrane of renal and intestinal epithelial cells. This uptake is sodium-dependent and chloride-independent. Requires CLTRN in kidney or ACE2 in intestine for cell surface expression and amino acid transporter activity. This Mus musculus (Mouse) protein is Sodium-dependent neutral amino acid transporter B(0)AT1 (Slc6a19).